We begin with the raw amino-acid sequence, 197 residues long: Isopentenyl-diphosphate Delta-isomerase (197 aa).

Mn(2+) is bound by residues histidine 41 and histidine 48. A Nudix hydrolase domain is found at 46–183 (QLHRAFSVFL…AWFMTVLDAA (138 aa)). The active site involves cysteine 83. Histidine 85 contacts Mn(2+). Glutamate 103 serves as a coordination point for Mg(2+). Glutamate 130 and glutamate 132 together coordinate Mn(2+). The active site involves glutamate 132.

This sequence belongs to the IPP isomerase type 1 family. Mg(2+) serves as cofactor. The cofactor is Mn(2+).

It is found in the cytoplasm. It carries out the reaction isopentenyl diphosphate = dimethylallyl diphosphate. It participates in isoprenoid biosynthesis; dimethylallyl diphosphate biosynthesis; dimethylallyl diphosphate from isopentenyl diphosphate: step 1/1. In terms of biological role, catalyzes the 1,3-allylic rearrangement of the homoallylic substrate isopentenyl (IPP) to its highly electrophilic allylic isomer, dimethylallyl diphosphate (DMAPP). The chain is Isopentenyl-diphosphate Delta-isomerase from Streptomyces griseus subsp. griseus (strain JCM 4626 / CBS 651.72 / NBRC 13350 / KCC S-0626 / ISP 5235).